Reading from the N-terminus, the 301-residue chain is Protoheme IX farnesyltransferase (301 aa).

The next 9 membrane-spanning stretches (helical) occupy residues 20-42 (FTEL…GMWL), 55-75 (VDVI…SGAF), 105-125 (ALMV…MTTW), 126-146 (QAGV…SLYA), 150-172 (LVSN…WFAV), 176-198 (FSMV…FYAI), 227-247 (MFFW…LGIV), 249-269 (VILA…GFKM), and 280-300 (FIYS…ISIF).

Belongs to the UbiA prenyltransferase family. Protoheme IX farnesyltransferase subfamily. Interacts with CtaA.

The protein localises to the cell membrane. The catalysed reaction is heme b + (2E,6E)-farnesyl diphosphate + H2O = Fe(II)-heme o + diphosphate. The protein operates within porphyrin-containing compound metabolism; heme O biosynthesis; heme O from protoheme: step 1/1. Converts heme B (protoheme IX) to heme O by substitution of the vinyl group on carbon 2 of heme B porphyrin ring with a hydroxyethyl farnesyl side group. This is Protoheme IX farnesyltransferase from Listeria welshimeri serovar 6b (strain ATCC 35897 / DSM 20650 / CCUG 15529 / CIP 8149 / NCTC 11857 / SLCC 5334 / V8).